A 249-amino-acid polypeptide reads, in one-letter code: 5'-nucleotidase SurE (249 aa).

A divalent metal cation contacts are provided by Asp8, Asp9, Ser39, and Asn91.

Belongs to the SurE nucleotidase family. A divalent metal cation is required as a cofactor.

It is found in the cytoplasm. The catalysed reaction is a ribonucleoside 5'-phosphate + H2O = a ribonucleoside + phosphate. Functionally, nucleotidase that shows phosphatase activity on nucleoside 5'-monophosphates. In Pseudomonas entomophila (strain L48), this protein is 5'-nucleotidase SurE.